Reading from the N-terminus, the 140-residue chain is Nucleoside diphosphate kinase (140 aa).

ATP contacts are provided by lysine 11, phenylalanine 59, arginine 87, threonine 93, arginine 104, and asparagine 114. Histidine 117 acts as the Pros-phosphohistidine intermediate in catalysis.

Belongs to the NDK family. As to quaternary structure, homotetramer. It depends on Mg(2+) as a cofactor.

Its subcellular location is the cytoplasm. The catalysed reaction is a 2'-deoxyribonucleoside 5'-diphosphate + ATP = a 2'-deoxyribonucleoside 5'-triphosphate + ADP. It carries out the reaction a ribonucleoside 5'-diphosphate + ATP = a ribonucleoside 5'-triphosphate + ADP. In terms of biological role, major role in the synthesis of nucleoside triphosphates other than ATP. The ATP gamma phosphate is transferred to the NDP beta phosphate via a ping-pong mechanism, using a phosphorylated active-site intermediate. This chain is Nucleoside diphosphate kinase, found in Rickettsia typhi (strain ATCC VR-144 / Wilmington).